The sequence spans 492 residues: Citrate synthase, peroxisomal (492 aa).

Catalysis depends on residues His307, His346, and Asp402. Positions 469-492 (PAKVRSQDSYSSATTKRYSKVTSH) are disordered. The span at 475–484 (QDSYSSATTK) shows a compositional bias: polar residues.

Belongs to the citrate synthase family.

The protein resides in the peroxisome. It catalyses the reaction oxaloacetate + acetyl-CoA + H2O = citrate + CoA + H(+). It functions in the pathway carbohydrate metabolism; tricarboxylic acid cycle; isocitrate from oxaloacetate: step 1/2. Its function is as follows. Peroxisomal protein involved in the cellular biosynthesis of citrate, and required primarily for cell growth and modulation of multicellular development. This is Citrate synthase, peroxisomal (cshA) from Dictyostelium discoideum (Social amoeba).